Here is a 183-residue protein sequence, read N- to C-terminus: Capsid protein (183 aa).

The interval 143-183 is disordered; the sequence is LPETTVIRRRGRSPRRRTPSPRRRRSQSPRRRRSQSREPQC. Basic residues predominate over residues 149 to 176; it reads IRRRGRSPRRRTPSPRRRRSQSPRRRRS. S155, S162, and S170 each carry phosphoserine; by host. The stretch at 155–161 is one 1; half-length repeat; that stretch reads SPRRRTP. Residues 155-177 are 3 X 8 AA repeats of S-P-R-R-R-[PR]-S-Q; it reads SPRRRTPSPRRRRSQSPRRRRSQ. A Bipartite nuclear localization signal motif is present at residues 158-175; the sequence is RRTPSPRRRRSQSPRRRR. 2 repeat units span residues 162-169 and 170-177. The segment at 177–183 is RNA binding; sequence QSREPQC.

This sequence belongs to the orthohepadnavirus core antigen family. Homodimerizes, then multimerizes. Interacts with cytosol exposed regions of viral L glycoprotein present in the reticulum-to-Golgi compartment. Interacts with human FLNB. Phosphorylated form interacts with host importin alpha; this interaction depends on the exposure of the NLS, which itself depends upon genome maturation and/or phosphorylation of the capsid protein. Interacts with host NUP153. Phosphorylated by host SRPK1, SRPK2, and maybe protein kinase C or GAPDH. Phosphorylation is critical for pregenomic RNA packaging. Protein kinase C phosphorylation is stimulated by HBx protein and may play a role in transport of the viral genome to the nucleus at the late step during the viral replication cycle.

The protein localises to the virion. The protein resides in the host cytoplasm. Functionally, self assembles to form an icosahedral capsid. Most capsids appear to be large particles with an icosahedral symmetry of T=4 and consist of 240 copies of capsid protein, though a fraction forms smaller T=3 particles consisting of 180 capsid proteins. Entering capsids are transported along microtubules to the nucleus. Phosphorylation of the capsid is thought to induce exposure of nuclear localization signal in the C-terminal portion of the capsid protein that allows binding to the nuclear pore complex via the importin (karyopherin-) alpha and beta. Capsids are imported in intact form through the nuclear pore into the nuclear basket, where it probably binds NUP153. Only capsids that contain the mature viral genome can release the viral DNA and capsid protein into the nucleoplasm. Immature capsids get stuck in the basket. Capsids encapsulate the pre-genomic RNA and the P protein. Pre-genomic RNA is reverse-transcribed into DNA while the capsid is still in the cytoplasm. The capsid can then either be directed to the nucleus, providing more genomes for transcription, or bud through the endoplasmic reticulum to provide new virions. The protein is Capsid protein of Hepatitis B virus genotype B1 (isolate Japan/Ry30/2002) (HBV-B).